The chain runs to 519 residues: Glucoamylase GLA1 (519 aa).

The N-terminal stretch at 1-27 (MRFGVLISVFVAIVSALPLQEGPLNKR) is a signal peptide. N-linked (GlcNAc...) asparagine glycans are attached at residues Asn115 and Asn127. A substrate-binding site is contributed by Trp166. An N-linked (GlcNAc...) asparagine glycan is attached at Asn205. The active-site Proton acceptor is the Asp234. Catalysis depends on Glu237, which acts as the Proton donor.

It belongs to the glycosyl hydrolase 15 family.

The catalysed reaction is Hydrolysis of terminal (1-&gt;4)-linked alpha-D-glucose residues successively from non-reducing ends of the chains with release of beta-D-glucose.. This chain is Glucoamylase GLA1 (GLA1), found in Saccharomycopsis fibuligera (Yeast).